We begin with the raw amino-acid sequence, 422 residues long: UDP-N-acetylglucosamine 1-carboxyvinyltransferase (422 aa).

22-23 lines the phosphoenolpyruvate pocket; that stretch reads KN. Arg-92 contacts UDP-N-acetyl-alpha-D-glucosamine. Cys-116 serves as the catalytic Proton donor. Cys-116 bears the 2-(S-cysteinyl)pyruvic acid O-phosphothioketal mark. 2 residues coordinate UDP-N-acetyl-alpha-D-glucosamine: Asp-306 and Ile-328.

Belongs to the EPSP synthase family. MurA subfamily.

It localises to the cytoplasm. The catalysed reaction is phosphoenolpyruvate + UDP-N-acetyl-alpha-D-glucosamine = UDP-N-acetyl-3-O-(1-carboxyvinyl)-alpha-D-glucosamine + phosphate. The protein operates within cell wall biogenesis; peptidoglycan biosynthesis. Its function is as follows. Cell wall formation. Adds enolpyruvyl to UDP-N-acetylglucosamine. This chain is UDP-N-acetylglucosamine 1-carboxyvinyltransferase, found in Elusimicrobium minutum (strain Pei191).